Here is a 414-residue protein sequence, read N- to C-terminus: Tryptophan synthase beta chain (414 aa).

Lys109 is modified (N6-(pyridoxal phosphate)lysine).

This sequence belongs to the TrpB family. Tetramer of two alpha and two beta chains. It depends on pyridoxal 5'-phosphate as a cofactor.

The enzyme catalyses (1S,2R)-1-C-(indol-3-yl)glycerol 3-phosphate + L-serine = D-glyceraldehyde 3-phosphate + L-tryptophan + H2O. Its pathway is amino-acid biosynthesis; L-tryptophan biosynthesis; L-tryptophan from chorismate: step 5/5. Functionally, the beta subunit is responsible for the synthesis of L-tryptophan from indole and L-serine. In Prochlorococcus marinus (strain AS9601), this protein is Tryptophan synthase beta chain.